The following is an 89-amino-acid chain: Small ribosomal subunit protein uS15 (89 aa).

It belongs to the universal ribosomal protein uS15 family. Part of the 30S ribosomal subunit. Forms a bridge to the 50S subunit in the 70S ribosome, contacting the 23S rRNA.

Its function is as follows. One of the primary rRNA binding proteins, it binds directly to 16S rRNA where it helps nucleate assembly of the platform of the 30S subunit by binding and bridging several RNA helices of the 16S rRNA. Forms an intersubunit bridge (bridge B4) with the 23S rRNA of the 50S subunit in the ribosome. The protein is Small ribosomal subunit protein uS15 of Staphylococcus saprophyticus subsp. saprophyticus (strain ATCC 15305 / DSM 20229 / NCIMB 8711 / NCTC 7292 / S-41).